The primary structure comprises 460 residues: Polygalacturonase (460 aa).

The signal sequence occupies residues 1–26 (MALKTQLLWSFVVVFVVSFSTTSCSG). An N-linked (GlcNAc...) asparagine glycan is attached at N280. Catalysis depends on D292, which acts as the Proton donor. H315 is an active-site residue. N421 carries N-linked (GlcNAc...) asparagine glycosylation.

The protein belongs to the glycosyl hydrolase 28 family.

It is found in the secreted. It localises to the cell wall. The catalysed reaction is (1,4-alpha-D-galacturonosyl)n+m + H2O = (1,4-alpha-D-galacturonosyl)n + (1,4-alpha-D-galacturonosyl)m.. Functionally, acts in concert with the pectinesterase, in the ripening process. Is involved in cell wall metabolism, specifically in polyuronide degradation. This is Polygalacturonase from Malus domestica (Apple).